Reading from the N-terminus, the 148-residue chain is Glutamate mutase sigma subunit (148 aa).

Residues 3–140 form the B12-binding domain; that stretch reads NPTIVIGVIG…KRDIERVMQS (138 aa). Residues 13 to 17, His-16, 61 to 63, and 93 to 97 contribute to the adenosylcob(III)alamin site; these read ADCHA, SSI, and NLVIG.

Belongs to the methylaspartate mutase GlmS subunit family. Heterotetramer composed of 2 epsilon subunits (GlmE) and 2 sigma subunits (GlmS). GlmE exists as a homodimer and GlmS as a monomer. Requires adenosylcob(III)alamin as cofactor.

It catalyses the reaction (2S,3S)-3-methyl-L-aspartate = L-glutamate. The protein operates within amino-acid degradation; L-glutamate degradation via mesaconate pathway; acetate and pyruvate from L-glutamate: step 1/4. Its function is as follows. Catalyzes the carbon skeleton rearrangement of L-glutamate to L-threo-3-methylaspartate ((2S,3S)-3-methylaspartate). This is Glutamate mutase sigma subunit from Yersinia enterocolitica serotype O:8 / biotype 1B (strain NCTC 13174 / 8081).